Here is a 349-residue protein sequence, read N- to C-terminus: Phosphate acyltransferase (349 aa).

It belongs to the PlsX family. As to quaternary structure, homodimer. Probably interacts with PlsY.

The protein localises to the cytoplasm. It carries out the reaction a fatty acyl-[ACP] + phosphate = an acyl phosphate + holo-[ACP]. Its pathway is lipid metabolism; phospholipid metabolism. Its function is as follows. Catalyzes the reversible formation of acyl-phosphate (acyl-PO(4)) from acyl-[acyl-carrier-protein] (acyl-ACP). This enzyme utilizes acyl-ACP as fatty acyl donor, but not acyl-CoA. This is Phosphate acyltransferase from Albidiferax ferrireducens (strain ATCC BAA-621 / DSM 15236 / T118) (Rhodoferax ferrireducens).